The chain runs to 160 residues: Cytochrome c-type biogenesis protein CcmE (160 aa).

Residues 1–7 lie on the Cytoplasmic side of the membrane; it reads MTRKQRR. The chain crosses the membrane as a helical; Signal-anchor for type II membrane protein span at residues 8-28; that stretch reads ATFIAVSLGILALAVGLVLYA. Residues 29–160 lie on the Periplasmic side of the membrane; it reads MRDSIVYFYS…SETYGQGSYP (132 aa). Heme contacts are provided by His-122 and Tyr-126. Residues 141-160 form a disordered region; the sequence is WQGEGAEAPHSETYGQGSYP.

This sequence belongs to the CcmE/CycJ family.

It is found in the cell inner membrane. In terms of biological role, heme chaperone required for the biogenesis of c-type cytochromes. Transiently binds heme delivered by CcmC and transfers the heme to apo-cytochromes in a process facilitated by CcmF and CcmH. This Parvibaculum lavamentivorans (strain DS-1 / DSM 13023 / NCIMB 13966) protein is Cytochrome c-type biogenesis protein CcmE.